A 1182-amino-acid polypeptide reads, in one-letter code: Rho GTPase-activating protein 20 (1182 aa).

A disordered region spans residues 1–40 (MEAMSPQQDALGAQPGRSSSLTGMSRIAGGPGTKKKMKTL). Phosphoserine is present on S46. The PH domain maps to 85–185 (TLLIDGPVEL…WLSLLQRYIA (101 aa)). The 90-residue stretch at 194–283 (KSIPLKIFAK…TALLTQGSRD (90 aa)) folds into the Ras-associating domain. The Rho-GAP domain occupies 365–551 (VSLPDLCEND…FLIENCCRVF (187 aa)). Residues S704 and S730 each carry the phosphoserine modification. 6 disordered regions span residues 745 to 772 (QTQPQKKGDKVCLKQSSVTGTDVSKRNT), 803 to 839 (VASYSHGSSQDHPRKQAFDADPCRFSPPHLTDAQKSS), 935 to 955 (SYSSLSSPGSSPSGSSVSSQD), 982 to 1011 (TQRKQEELSSDFDSPSRLSGMPGPSMGQAS), 1074 to 1101 (LPSCASGTPEADSLQESQDDLQGDEGPG), and 1142 to 1182 (SGGQ…GTDI). The segment covering 758–772 (KQSSVTGTDVSKRNT) has biased composition (polar residues). Basic and acidic residues predominate over residues 811 to 824 (SQDHPRKQAFDADP).

GTPase activator for the Rho-type GTPases by converting them to an inactive GDP-bound state. The polypeptide is Rho GTPase-activating protein 20 (Arhgap20) (Mus musculus (Mouse)).